Reading from the N-terminus, the 349-residue chain is UDP-N-acetylenolpyruvoylglucosamine reductase (349 aa).

The region spanning 24–197 (FGIDATARFA…VAVTFRLPKR (174 aa)) is the FAD-binding PCMH-type domain. R173 is an active-site residue. The Proton donor role is filled by S249. The active site involves E345.

This sequence belongs to the MurB family. It depends on FAD as a cofactor.

The protein localises to the cytoplasm. It carries out the reaction UDP-N-acetyl-alpha-D-muramate + NADP(+) = UDP-N-acetyl-3-O-(1-carboxyvinyl)-alpha-D-glucosamine + NADPH + H(+). Its pathway is cell wall biogenesis; peptidoglycan biosynthesis. Its function is as follows. Cell wall formation. The polypeptide is UDP-N-acetylenolpyruvoylglucosamine reductase (Burkholderia ambifaria (strain ATCC BAA-244 / DSM 16087 / CCUG 44356 / LMG 19182 / AMMD) (Burkholderia cepacia (strain AMMD))).